A 399-amino-acid polypeptide reads, in one-letter code: Glutathione-independent formaldehyde dehydrogenase (399 aa).

Cys47 serves as a coordination point for Zn(2+). The NAD(+) site is built by Gly48, Ser49, and His52. Residues His68, Cys98, Cys101, Cys104, Cys112, and Asp170 each contribute to the Zn(2+) site. Residues Val198, Asp218, Arg223, Val263, Arg268, His270, Pro300, Leu302, Gly337, and Thr339 each coordinate NAD(+).

Belongs to the zinc-containing alcohol dehydrogenase family. As to quaternary structure, homotetramer. The cofactor is Zn(2+).

The enzyme catalyses formaldehyde + NAD(+) + H2O = formate + NADH + 2 H(+). The catalysed reaction is acetaldehyde + NAD(+) + H2O = acetate + NADH + 2 H(+). It carries out the reaction 2 formaldehyde + H2O = methanol + formate + H(+). With respect to regulation, inactivated by bipyridine and p-chloromercuribenzoate. Dehydrogenase that catalyzes the NAD(+)-dependent oxidation of formaldehyde and acetaldehyde, and, to a lesser extent, long-chain alcohols, but is inactive against propionaldehyde, butyraldehyde, methanol and ethanol. Can also catalyze the dismutation of a wide range of aldehydes such as formaldehyde. This is Glutathione-independent formaldehyde dehydrogenase from Pseudomonas putida (Arthrobacter siderocapsulatus).